A 234-amino-acid polypeptide reads, in one-letter code: Transcriptional activator protein TraR (234 aa).

The 66-residue stretch at 167–232 (TAEDAAWLDP…HLTALAIKRK (66 aa)) folds into the HTH luxR-type domain. A DNA-binding region (H-T-H motif) is located at residues 191 to 210 (MEEIADVEEVKYNSVRVKLR).

The protein belongs to the autoinducer-regulated transcriptional regulatory protein family.

Functionally, positive regulation of conjugal transfer of Ti plasmids. This is Transcriptional activator protein TraR (traR) from Agrobacterium vitis (Rhizobium vitis).